Here is a 475-residue protein sequence, read N- to C-terminus: DNA-binding protein D-ETS-6 (475 aa).

The interval serine 42–proline 150 is disordered. The segment covering serine 70 to proline 108 has biased composition (low complexity). The span at valine 109–valine 121 shows a compositional bias: pro residues. Residues serine 122 to valine 144 show a composition bias toward low complexity. The PNT domain maps to arginine 132–alanine 219. Residues isoleucine 255–aspartate 335 constitute a DNA-binding region (ETS). Positions glycine 350–asparagine 475 are disordered. Over residues proline 375 to histidine 388 the composition is skewed to basic residues. Low complexity predominate over residues serine 401–serine 436. The span at arginine 453–asparagine 475 shows a compositional bias: polar residues.

Belongs to the ETS family. Embryonic ventral nervous system and 1 pair of neurons in each thoracic segment.

Its subcellular location is the nucleus. In Drosophila melanogaster (Fruit fly), this protein is DNA-binding protein D-ETS-6 (Ets21C).